The sequence spans 944 residues: UvrABC system protein A (944 aa).

One can recognise an ABC transporter 1 domain in the interval 1–242 (MSKVDFLHIK…GKGIVKVENV (242 aa)). Position 34–41 (34–41 (GLSGSGKS)) interacts with ATP. The C4-type; degenerate zinc-finger motif lies at 256-283 (CPKGDFEMPKIETRLFSFNSPYGMCQNC). ABC transporter domains are found at residues 359 to 597 (EEID…KYLS) and 610 to 935 (SGSG…EKSY). An ATP-binding site is contributed by 643–650 (GVSGSGKS). The C4-type zinc-finger motif lies at 744-770 (CEKCSGDGSIKIEMFFLPNVYITCDHC).

The protein belongs to the ABC transporter superfamily. UvrA family. As to quaternary structure, forms a heterotetramer with UvrB during the search for lesions.

It localises to the cytoplasm. The UvrABC repair system catalyzes the recognition and processing of DNA lesions. UvrA is an ATPase and a DNA-binding protein. A damage recognition complex composed of 2 UvrA and 2 UvrB subunits scans DNA for abnormalities. When the presence of a lesion has been verified by UvrB, the UvrA molecules dissociate. This chain is UvrABC system protein A, found in Mycoplasmopsis pulmonis (strain UAB CTIP) (Mycoplasma pulmonis).